Consider the following 197-residue polypeptide: Protein shisa-4 (197 aa).

Positions 1–27 are cleaved as a signal peptide; that stretch reads MPPAGPRGTAPLAAVVLLVLGAPLALA. Topologically, residues 28–87 are extracellular; sequence SEDCLWYLDRNGSWHPGFDCEFFTFCCGTCYQRYCCRDLTLLITERQQKHCLAFSPKTIA. The chain crosses the membrane as a helical span at residues 88–108; sequence GIASAVILFVAVVATTICCFL. Over 109-197 the chain is Cytoplasmic; that stretch reads CSCCYLYRRR…MPPQPSYPGA (89 aa).

The protein belongs to the shisa family.

It localises to the membrane. The protein is Protein shisa-4 (Shisa4) of Mus musculus (Mouse).